Reading from the N-terminus, the 479-residue chain is Sulfate adenylyltransferase subunit 1 (479 aa).

In terms of domain architecture, tr-type G spans 25 to 239 (KSLLRFLTCG…EVLETVDIQR (215 aa)). The tract at residues 34-41 (GSVDDGKS) is G1. 34–41 (GSVDDGKS) provides a ligand contact to GTP. Residues 92 to 96 (GITID) form a G2 region. Positions 113–116 (DTPG) are G3. GTP-binding positions include 113–117 (DTPGH) and 168–171 (NKMD). Residues 168-171 (NKMD) are G4. Residues 206 to 208 (SAL) form a G5 region.

This sequence belongs to the TRAFAC class translation factor GTPase superfamily. Classic translation factor GTPase family. CysN/NodQ subfamily. Heterodimer composed of CysD, the smaller subunit, and CysN.

The enzyme catalyses sulfate + ATP + H(+) = adenosine 5'-phosphosulfate + diphosphate. It participates in sulfur metabolism; hydrogen sulfide biosynthesis; sulfite from sulfate: step 1/3. With CysD forms the ATP sulfurylase (ATPS) that catalyzes the adenylation of sulfate producing adenosine 5'-phosphosulfate (APS) and diphosphate, the first enzymatic step in sulfur assimilation pathway. APS synthesis involves the formation of a high-energy phosphoric-sulfuric acid anhydride bond driven by GTP hydrolysis by CysN coupled to ATP hydrolysis by CysD. The polypeptide is Sulfate adenylyltransferase subunit 1 (Salmonella agona (strain SL483)).